A 489-amino-acid chain; its full sequence is MALFIFLGIWLSCLVFLFLWNQHHVRRKLPPGPTPLPIFGNILQVGVKNISKSMCMLAKEYGPVFTMYLGMKPTVVLYGYEVLKEALIDRGEEFSDKMHSSMLSKVSQGLGIVFSNGEIWKQTRRFSLMVLRSMGMGKRTIENRIQEEVVYLLEALRKTNGSPCDPSFLLACVPCNVISSVIFQHRFDYSDEKFQKFIENFHTKIEILASPWAQLCSAYPVLYYLPGIHNKFLKDVTEQKKFILMEINRHRASLNLSNPQDFIDYFLIKMEKEKHNEKSEFTMDNLIVTIGDLFGAGTETTSSTIKYGLLLLLKYPEVTAKIQEEITRVIGRHRRPCMQDRNHMPYTDAVLHEIQRYIDFVPIPLPRKTTQDVEFRGYHIPKGTSVMACLTSALHDDKEFPNPEKFDPGHFLDEKGNFKKSDYFMAFSAGRRACIGEGLARMEMFLILTSILQHFTLKPLVNPEDIDTTPVQPGLLSVPPPFELCFIPV.

The first 27 residues, 1 to 27, serve as a signal peptide directing secretion; it reads MALFIFLGIWLSCLVFLFLWNQHHVRR. Cys434 is a binding site for heme.

Belongs to the cytochrome P450 family. Heme serves as cofactor.

The protein localises to the endoplasmic reticulum membrane. It localises to the microsome membrane. It carries out the reaction chenodeoxycholate + reduced [NADPH--hemoprotein reductase] + O2 = alpha-muricholate + oxidized [NADPH--hemoprotein reductase] + H2O + H(+). The catalysed reaction is ursodeoxycholate + reduced [NADPH--hemoprotein reductase] + O2 = beta-muricholate + oxidized [NADPH--hemoprotein reductase] + H2O + H(+). Its function is as follows. A cytochrome P450 monooxygenase involved in muricholic acid (MCA) synthesis. Hydroxylates at the 6-beta position two major bile acids, chenodeoxycholic acid (CDCA) and ursodeoxycholic acid (UDCA) to form alpha-MCA and beta-MCA, respectively. May regulate NR1H4/farnesoid X receptor signaling, as taurine-conjugated MCAs are antagonists of NR1H4. Mechanistically, uses molecular oxygen inserting one oxygen atom into a substrate, and reducing the second into a water molecule, with two electrons provided by NADPH via cytochrome P450 reductase (CPR; NADPH-ferrihemoprotein reductase). In Rattus norvegicus (Rat), this protein is Cytochrome P450 2C70.